The following is a 525-amino-acid chain: GMP synthase [glutamine-hydrolyzing] (525 aa).

The Glutamine amidotransferase type-1 domain occupies 8-206 (PLLILDFGSQ…VVDICKASTD (199 aa)). Cys-85 (nucleophile) is an active-site residue. Catalysis depends on residues His-180 and Glu-182. Positions 207 to 400 (WTPEHIIDEA…LGLPHDMVYR (194 aa)) constitute a GMPS ATP-PPase domain. 234-240 (SGGVDSS) serves as a coordination point for ATP.

As to quaternary structure, homodimer.

The enzyme catalyses XMP + L-glutamine + ATP + H2O = GMP + L-glutamate + AMP + diphosphate + 2 H(+). The protein operates within purine metabolism; GMP biosynthesis; GMP from XMP (L-Gln route): step 1/1. In terms of biological role, catalyzes the synthesis of GMP from XMP. The protein is GMP synthase [glutamine-hydrolyzing] of Legionella pneumophila subsp. pneumophila (strain Philadelphia 1 / ATCC 33152 / DSM 7513).